Consider the following 365-residue polypeptide: Cyclin-D5-2 (365 aa).

Belongs to the cyclin family. Cyclin D subfamily.

This is Cyclin-D5-2 (CYCD5-2) from Oryza sativa subsp. japonica (Rice).